The sequence spans 121 residues: MSPLAQKKVAHLKRKTRVRKKIRGTTDRPRLNVYKSARHIYAQIIDDVTGVTLVSASTVQDESDALKYTGNVEAAKCVGAMVAKKALEKNITSVVFDRNGFLYHGRVKALADSARENGLSF.

Belongs to the universal ribosomal protein uL18 family. Part of the 50S ribosomal subunit; part of the 5S rRNA/L5/L18/L25 subcomplex. Contacts the 5S and 23S rRNAs.

In terms of biological role, this is one of the proteins that bind and probably mediate the attachment of the 5S RNA into the large ribosomal subunit, where it forms part of the central protuberance. The chain is Large ribosomal subunit protein uL18 from Geobacter metallireducens (strain ATCC 53774 / DSM 7210 / GS-15).